Reading from the N-terminus, the 61-residue chain is Probable tautomerase BH3814 (61 aa).

The Proton acceptor; via imino nitrogen role is filled by proline 2.

The protein belongs to the 4-oxalocrotonate tautomerase family.

The protein is Probable tautomerase BH3814 of Halalkalibacterium halodurans (strain ATCC BAA-125 / DSM 18197 / FERM 7344 / JCM 9153 / C-125) (Bacillus halodurans).